Here is a 65-residue protein sequence, read N- to C-terminus: Seminal plasma acrosin inhibitor A1 (65 aa).

The Kazal-like domain occupies 1–59 (TRKQPNCNVYRSHLFFCTRQMDPICGTNGKSYANPCIFCSEKGLRNQKFDFGHWGHCRE). Intrachain disulfides connect Cys7–Cys39, Cys17–Cys36, and Cys25–Cys57. Residue Ser12 is glycosylated (O-linked (GalNAc...) serine). O-linked (GalNAc...) serine glycosylation is present at Ser62.

In terms of processing, the identity of the O-linked saccharides are not reported in Ref.1. The O-linked polysaccharides on Ser-12 and Ser-62 are probably the mucin type linked to GalNAc. Seminal plasma.

The protein resides in the secreted. Inhibits acrosin. The chain is Seminal plasma acrosin inhibitor A1 from Sus scrofa (Pig).